The primary structure comprises 184 residues: Peptidyl-tRNA hydrolase (184 aa).

Y14 provides a ligand contact to tRNA. H19 (proton acceptor) is an active-site residue. Residues F60 and N62 each coordinate tRNA.

This sequence belongs to the PTH family. In terms of assembly, monomer.

Its subcellular location is the cytoplasm. It catalyses the reaction an N-acyl-L-alpha-aminoacyl-tRNA + H2O = an N-acyl-L-amino acid + a tRNA + H(+). Functionally, hydrolyzes ribosome-free peptidyl-tRNAs (with 1 or more amino acids incorporated), which drop off the ribosome during protein synthesis, or as a result of ribosome stalling. In terms of biological role, catalyzes the release of premature peptidyl moieties from peptidyl-tRNA molecules trapped in stalled 50S ribosomal subunits, and thus maintains levels of free tRNAs and 50S ribosomes. This chain is Peptidyl-tRNA hydrolase, found in Mesomycoplasma hyopneumoniae (strain 7448) (Mycoplasma hyopneumoniae).